Reading from the N-terminus, the 217-residue chain is Deoxyribose-phosphate aldolase (217 aa).

Catalysis depends on D89, which acts as the Proton donor/acceptor. Residue K151 is the Schiff-base intermediate with acetaldehyde of the active site. The active-site Proton donor/acceptor is K180.

The protein belongs to the DeoC/FbaB aldolase family. DeoC type 1 subfamily.

Its subcellular location is the cytoplasm. The catalysed reaction is 2-deoxy-D-ribose 5-phosphate = D-glyceraldehyde 3-phosphate + acetaldehyde. It functions in the pathway carbohydrate degradation; 2-deoxy-D-ribose 1-phosphate degradation; D-glyceraldehyde 3-phosphate and acetaldehyde from 2-deoxy-alpha-D-ribose 1-phosphate: step 2/2. Functionally, catalyzes a reversible aldol reaction between acetaldehyde and D-glyceraldehyde 3-phosphate to generate 2-deoxy-D-ribose 5-phosphate. This is Deoxyribose-phosphate aldolase from Mycoplasma mobile (strain ATCC 43663 / 163K / NCTC 11711) (Mesomycoplasma mobile).